A 685-amino-acid chain; its full sequence is Glycine--tRNA ligase beta subunit (685 aa).

This sequence belongs to the class-II aminoacyl-tRNA synthetase family. As to quaternary structure, tetramer of two alpha and two beta subunits.

It is found in the cytoplasm. It catalyses the reaction tRNA(Gly) + glycine + ATP = glycyl-tRNA(Gly) + AMP + diphosphate. In Leuconostoc mesenteroides subsp. mesenteroides (strain ATCC 8293 / DSM 20343 / BCRC 11652 / CCM 1803 / JCM 6124 / NCDO 523 / NBRC 100496 / NCIMB 8023 / NCTC 12954 / NRRL B-1118 / 37Y), this protein is Glycine--tRNA ligase beta subunit.